Consider the following 130-residue polypeptide: Glycine cleavage system H protein (130 aa).

In terms of domain architecture, Lipoyl-binding spans 24–106; the sequence is TATVGITDFA…YGDGWMFKVK (83 aa). At Lys65 the chain carries N6-lipoyllysine.

This sequence belongs to the GcvH family. The glycine cleavage system is composed of four proteins: P, T, L and H. (R)-lipoate serves as cofactor.

The glycine cleavage system catalyzes the degradation of glycine. The H protein shuttles the methylamine group of glycine from the P protein to the T protein. The protein is Glycine cleavage system H protein of Marinobacter nauticus (strain ATCC 700491 / DSM 11845 / VT8) (Marinobacter aquaeolei).